The following is a 443-amino-acid chain: Methyl-coenzyme M reductase I subunit beta (443 aa).

Y367 contributes to the coenzyme M binding site. A coenzyme B-binding site is contributed by G369.

Belongs to the methyl-coenzyme M reductase beta subunit family. MCR is a hexamer of two alpha, two beta, and two gamma chains, forming a dimer of heterotrimers. Requires coenzyme F430 as cofactor.

Its subcellular location is the cytoplasm. It catalyses the reaction coenzyme B + methyl-coenzyme M = methane + coenzyme M-coenzyme B heterodisulfide. Its pathway is one-carbon metabolism; methyl-coenzyme M reduction; methane from methyl-coenzyme M: step 1/1. Methyl-coenzyme M reductase activity is inhibited by 3-nitrooxypropanol (3-NOP) in vitro and in vivo, by oxidation of its active site Ni(I), which stops both growth and methanogenesis. Is also inhibited by the reaction product CoM-S-S-CoB. In terms of biological role, component of the methyl-coenzyme M reductase (MCR) I that catalyzes the reductive cleavage of methyl-coenzyme M (CoM-S-CH3 or 2-(methylthio)ethanesulfonate) using coenzyme B (CoB or 7-mercaptoheptanoylthreonine phosphate) as reductant which results in the production of methane and the mixed heterodisulfide of CoB and CoM (CoM-S-S-CoB). This is the final step in methanogenesis. Neither N-6-mercaptohexanoylthreonine phosphate (H-S-HxoTP) nor N-8-mercaptooctanoylthreonine phosphate (H-SOcoTP) nor any other thiol compound such as CoA or CoM can substitute for CoB as the electron donor. This is Methyl-coenzyme M reductase I subunit beta (mcrB) from Methanothermobacter marburgensis (strain ATCC BAA-927 / DSM 2133 / JCM 14651 / NBRC 100331 / OCM 82 / Marburg) (Methanobacterium thermoautotrophicum).